Reading from the N-terminus, the 163-residue chain is Transcriptional repressor NrdR (163 aa).

Residues 3–34 (CPFCAHPEDKVVDSRESKEGESIRRRRECLKC) fold into a zinc finger. Residues 49–139 (YMVVKKDGRR…VYLDFKDVRE (91 aa)) form the ATP-cone domain.

This sequence belongs to the NrdR family. Requires Zn(2+) as cofactor.

Its function is as follows. Negatively regulates transcription of bacterial ribonucleotide reductase nrd genes and operons by binding to NrdR-boxes. This Koribacter versatilis (strain Ellin345) protein is Transcriptional repressor NrdR.